Reading from the N-terminus, the 473-residue chain is GDP-fucose protein O-fucosyltransferase 2 (473 aa).

A signal peptide spans M1–A25. Residues G59 to N63, H283 to R285, and R379 to F380 contribute to the GDP-beta-L-fucose site. E60 serves as the catalytic Proton acceptor.

Belongs to the glycosyltransferase 68 family.

Its subcellular location is the endoplasmic reticulum. It catalyses the reaction L-seryl-[protein] + GDP-beta-L-fucose = 3-O-(alpha-L-fucosyl)-L-seryl-[protein] + GDP + H(+). The catalysed reaction is L-threonyl-[protein] + GDP-beta-L-fucose = 3-O-(alpha-L-fucosyl)-L-threonyl-[protein] + GDP + H(+). It participates in protein modification; protein glycosylation. In terms of biological role, catalyzes the reaction that attaches fucose through an O-glycosidic linkage to a conserved serine or threonine residue in the consensus sequence C1-X-X-S/T-C2 of thrombospondin type I repeats (TSRs) where C1 and C2 are the first and second cysteines of the repeat, respectively. O-fucosylates sporozoite proteins CSP and TRAP. O-fucosylation regulates stability and intracellular trafficking of TRAP but not of CSP. Dispensable for parasite transmission to the mosquito vector and/or infection of the vertebrate host hepatocytes. The chain is GDP-fucose protein O-fucosyltransferase 2 from Plasmodium berghei (strain Anka).